The sequence spans 324 residues: Glyoxylate/hydroxypyruvate reductase B (324 aa).

Residues R237 and E266 contribute to the active site. The active-site Proton donor is H285.

It belongs to the D-isomer specific 2-hydroxyacid dehydrogenase family. GhrB subfamily. In terms of assembly, homodimer.

Its subcellular location is the cytoplasm. It carries out the reaction glycolate + NADP(+) = glyoxylate + NADPH + H(+). The enzyme catalyses (R)-glycerate + NAD(+) = 3-hydroxypyruvate + NADH + H(+). It catalyses the reaction (R)-glycerate + NADP(+) = 3-hydroxypyruvate + NADPH + H(+). Functionally, catalyzes the NADPH-dependent reduction of glyoxylate and hydroxypyruvate into glycolate and glycerate, respectively. This Escherichia coli O17:K52:H18 (strain UMN026 / ExPEC) protein is Glyoxylate/hydroxypyruvate reductase B.